Here is a 633-residue protein sequence, read N- to C-terminus: Uracil permease (633 aa).

12 helical membrane-spanning segments follow: residues tryptophan 143–leucine 163, leucine 173–isoleucine 193, valine 197–methionine 217, tyrosine 242–proline 262, leucine 268–isoleucine 288, phenylalanine 310–isoleucine 330, leucine 350–alanine 370, alanine 400–alanine 420, glycine 442–serine 462, phenylalanine 465–serine 485, alanine 521–glycine 541, and tyrosine 559–valine 579.

The protein belongs to the purine-cytosine permease (2.A.39) family. Glycosylated (possible); but there is not yet direct biochemical evidence for it.

Its subcellular location is the membrane. Transport of uracil. This Saccharomyces cerevisiae (strain ATCC 204508 / S288c) (Baker's yeast) protein is Uracil permease (FUR4).